We begin with the raw amino-acid sequence, 137 residues long: CDGSH iron-sulfur domain-containing protein 3, mitochondrial (137 aa).

An N6-acetyllysine; alternate modification is found at Lys65. Lys65 carries the N6-succinyllysine; alternate modification. The [2Fe-2S] cluster site is built by Cys70, Cys72, Cys81, and His85. Position 96 is an N6-acetyllysine (Lys96). Residues Cys108, Cys110, Cys119, and His123 each coordinate [2Fe-2S] cluster. Lys124 carries the N6-acetyllysine; alternate modification. An N6-succinyllysine; alternate modification is found at Lys124.

This sequence belongs to the CISD protein family. In terms of assembly, monomer. [2Fe-2S] cluster serves as cofactor.

Its subcellular location is the mitochondrion. Can transfer its iron-sulfur clusters to the apoferrodoxins FDX1 and FDX2. Contributes to mitochondrial iron homeostasis and in maintaining normal levels of free iron and reactive oxygen species, and thereby contributes to normal mitochondrial function. In Mus musculus (Mouse), this protein is CDGSH iron-sulfur domain-containing protein 3, mitochondrial (Cisd3).